We begin with the raw amino-acid sequence, 120 residues long: Large ribosomal subunit protein bL20 (120 aa).

The protein belongs to the bacterial ribosomal protein bL20 family.

Binds directly to 23S ribosomal RNA and is necessary for the in vitro assembly process of the 50S ribosomal subunit. It is not involved in the protein synthesizing functions of that subunit. In Desulfitobacterium hafniense (strain DSM 10664 / DCB-2), this protein is Large ribosomal subunit protein bL20.